The sequence spans 388 residues: Processive diacylglycerol beta-glucosyltransferase (388 aa).

It belongs to the glycosyltransferase 28 family. UgtP subfamily.

It is found in the cell membrane. It catalyses the reaction a 1,2-diacyl-3-O-(beta-D-glucopyranosyl)-sn-glycerol + UDP-alpha-D-glucose = a 1,2-diacyl-3-O-(beta-D-Glc-(1-&gt;6)-beta-D-Glc)-sn-glycerol + UDP + H(+). It carries out the reaction a 1,2-diacyl-3-O-(beta-D-Glc-(1-&gt;6)-beta-D-Glc)-sn-glycerol + UDP-alpha-D-glucose = a 1,2-diacyl-3-O-(beta-D-Glc-(1-&gt;6)-beta-D-Glc-(1-&gt;6)-beta-D-Glc)-sn-glycerol + UDP + H(+). The catalysed reaction is a 1,2-diacyl-sn-glycerol + UDP-alpha-D-glucose = a 1,2-diacyl-3-O-(beta-D-glucopyranosyl)-sn-glycerol + UDP + H(+). It functions in the pathway glycolipid metabolism; diglucosyl-diacylglycerol biosynthesis. Processive glucosyltransferase involved in the biosynthesis of both the bilayer- and non-bilayer-forming membrane glucolipids. Is able to successively transfer up to three glucosyl residues to diacylglycerol (DAG), thereby catalyzing the formation of beta-monoglucosyl-DAG (3-O-(beta-D-glucopyranosyl)-1,2-diacyl-sn-glycerol), beta-diglucosyl-DAG (3-O-(beta-D-glucopyranosyl-beta-(1-&gt;6)-D-glucopyranosyl)-1,2-diacyl-sn-glycerol) and beta-triglucosyl-DAG (3-O-(beta-D-glucopyranosyl-beta-(1-&gt;6)-D-glucopyranosyl-beta-(1-&gt;6)-D-glucopyranosyl)-1,2-diacyl-sn-glycerol). Beta-diglucosyl-DAG is the predominant glycolipid found in Bacillales and is also used as a membrane anchor for lipoteichoic acid (LTA). This is Processive diacylglycerol beta-glucosyltransferase from Bacillus cytotoxicus (strain DSM 22905 / CIP 110041 / 391-98 / NVH 391-98).